A 404-amino-acid polypeptide reads, in one-letter code: Cysteine desulfurase IscS (404 aa).

Pyridoxal 5'-phosphate is bound by residues Ala75 to Thr76, Asn155, Gln183, and Ser203 to His205. Lys206 is modified (N6-(pyridoxal phosphate)lysine). Thr243 is a binding site for pyridoxal 5'-phosphate. The active-site Cysteine persulfide intermediate is Cys328. Residue Cys328 coordinates [2Fe-2S] cluster.

It belongs to the class-V pyridoxal-phosphate-dependent aminotransferase family. NifS/IscS subfamily. In terms of assembly, homodimer. Forms a heterotetramer with IscU, interacts with other sulfur acceptors. Pyridoxal 5'-phosphate serves as cofactor.

Its subcellular location is the cytoplasm. The enzyme catalyses (sulfur carrier)-H + L-cysteine = (sulfur carrier)-SH + L-alanine. It functions in the pathway cofactor biosynthesis; iron-sulfur cluster biosynthesis. In terms of biological role, master enzyme that delivers sulfur to a number of partners involved in Fe-S cluster assembly, tRNA modification or cofactor biosynthesis. Catalyzes the removal of elemental sulfur atoms from cysteine to produce alanine. Functions as a sulfur delivery protein for Fe-S cluster synthesis onto IscU, an Fe-S scaffold assembly protein, as well as other S acceptor proteins. This Ectopseudomonas mendocina (strain ymp) (Pseudomonas mendocina) protein is Cysteine desulfurase IscS.